The sequence spans 100 residues: uncharacterized protein (100 aa).

The helical transmembrane segment at 13–32 (IWSSLNIICLMVTFLNVQLS) threads the bilayer.

The protein resides in the mitochondrion membrane. This is an uncharacterized protein from Schizosaccharomyces pombe (strain 972 / ATCC 24843) (Fission yeast).